A 255-amino-acid polypeptide reads, in one-letter code: Acetylglutamate kinase (255 aa).

Residues 40–41 (GG), Arg62, and Asn153 contribute to the substrate site.

It belongs to the acetylglutamate kinase family. ArgB subfamily.

Its subcellular location is the cytoplasm. The enzyme catalyses N-acetyl-L-glutamate + ATP = N-acetyl-L-glutamyl 5-phosphate + ADP. It participates in amino-acid biosynthesis; L-arginine biosynthesis; N(2)-acetyl-L-ornithine from L-glutamate: step 2/4. Functionally, catalyzes the ATP-dependent phosphorylation of N-acetyl-L-glutamate. The protein is Acetylglutamate kinase of Bacillus cereus (strain 03BB102).